A 246-amino-acid chain; its full sequence is Flagellar brake protein YcgR (246 aa).

Residues 122-234 (QRREFFRIQT…PMETIIQRYV (113 aa)) form the PilZ domain.

It belongs to the YcgR family. In terms of assembly, monomer. Interacts with the flagellar basal bodies.

It localises to the bacterial flagellum basal body. In terms of biological role, acts as a flagellar brake, regulating swimming and swarming in a bis-(3'-5') cyclic diguanylic acid (c-di-GMP)-dependent manner. Binds 1 c-di-GMP dimer per subunit. Increasing levels of c-di-GMP lead to decreased motility. In Chromobacterium violaceum (strain ATCC 12472 / DSM 30191 / JCM 1249 / CCUG 213 / NBRC 12614 / NCIMB 9131 / NCTC 9757 / MK), this protein is Flagellar brake protein YcgR.